The sequence spans 311 residues: GTP cyclohydrolase MptA (311 aa).

The protein belongs to the GTP cyclohydrolase IV family. As to quaternary structure, homodimer. Fe(2+) is required as a cofactor.

The catalysed reaction is GTP + H2O = 7,8-dihydroneopterin 2',3'-cyclic phosphate + formate + diphosphate + H(+). The protein operates within cofactor biosynthesis; 5,6,7,8-tetrahydromethanopterin biosynthesis. In terms of biological role, converts GTP to 7,8-dihydro-D-neopterin 2',3'-cyclic phosphate, the first intermediate in the biosynthesis of coenzyme methanopterin. The chain is GTP cyclohydrolase MptA from Methanobrevibacter smithii (strain ATCC 35061 / DSM 861 / OCM 144 / PS).